Here is a 459-residue protein sequence, read N- to C-terminus: Sorting nexin-8 (459 aa).

Residues 1–37 (MTGRAMDPLPSPAVAAAAEAEADEEADPPATGPRTSQ) are disordered. The 109-residue stretch at 68–176 (AKDTVQVELI…KLFLSFSGSD (109 aa)) folds into the PX domain. A 1,2-diacyl-sn-glycero-3-phospho-(1D-myo-inositol-3-phosphate)-binding residues include Arg104, Lys130, and Arg143. Position 446 is a phosphothreonine (Thr446). Ser450 carries the phosphoserine modification.

Belongs to the sorting nexin family.

Its subcellular location is the early endosome membrane. In terms of biological role, may be involved in several stages of intracellular trafficking. May play a role in intracellular protein transport from early endosomes to the trans-Golgi network. The polypeptide is Sorting nexin-8 (Snx8) (Mus musculus (Mouse)).